We begin with the raw amino-acid sequence, 1299 residues long: MAP3K epsilon protein kinase 1 (1299 aa).

In terms of domain architecture, Protein kinase spans 20–274; sequence YMLGDEIGKG…AKTLLSHPWI (255 aa). HEAT repeat units follow at residues 25 to 62 and 86 to 125; these read EIGK…EDLN and LKTK…TVYI. Residues 26 to 34 and Lys-49 contribute to the ATP site; that span reads IGKGAYGRV. Asp-144 (proton acceptor) is an active-site residue. One copy of the HEAT 3 repeat lies at 218–256; it reads PYYDLQPMPALFRIVQDDSPPIPDSLSPDITDFLRQCFK. Disordered stretches follow at residues 291–458 and 483–509; these read IRYM…GNEL and GKLN…DGGK. A compositionally biased stretch (low complexity) spans 374 to 385; that stretch reads SSLQSSTCSISS. Composition is skewed to polar residues over residues 415-432 and 488-501; these read ATKQ…QRSH and ASAS…NQGD. HEAT repeat units lie at residues 532–570, 611–649, 653–694, 698–736, 743–780, 781–820, 868–900, 901–939, 955–994, 998–1036, 1043–1081, 1085–1122, 1125–1164, 1186–1210, 1211–1249, and 1279–1299; these read SNDG…LLPL, VFVT…DNID, NACL…SSSL, MFIA…VFKL, NDFC…SGQL, DQHE…PDGD, QPEQ…HIAG, LEKH…AASA, SDTS…ADTT, YMCS…DPNC, ADAI…INKR, QAAE…ASRN, EQLR…NDNR, CPER…RINT, TLAV…HHPR, and QVLV…NTVL. The segment at 795–852 is disordered; it reads VLKTRPGGGEEPSNSQRSDLYQPDGDRPRSSSAALDATEDVKQHHRISISSNRTSTDK.

The protein belongs to the protein kinase superfamily. Ser/Thr protein kinase family. Autophosphorylated. As to expression, expressed in both the sporophytic and the gametophytic tissues, especially in dividing cells.

The protein resides in the cytoplasm. Its subcellular location is the cytoskeleton. It localises to the microtubule organizing center. It is found in the nucleus. The protein localises to the nucleolus. The protein resides in the cell membrane. It catalyses the reaction L-seryl-[protein] + ATP = O-phospho-L-seryl-[protein] + ADP + H(+). It carries out the reaction L-threonyl-[protein] + ATP = O-phospho-L-threonyl-[protein] + ADP + H(+). Serine/threonine-protein kinase involved in the spatial and temporal control system organizing cortical activities in mitotic and postmitotic cells. Required for the normal functioning of the plasma membrane in developing pollen. Involved in the regulation of cell expansion and embryo development. This chain is MAP3K epsilon protein kinase 1, found in Brassica napus (Rape).